We begin with the raw amino-acid sequence, 534 residues long: Transcription factor RBF1 (534 aa).

Residues 1–36 (MSSNKNQSDLNIPTNSASLKQKQRQQLGIKSEIGAS) form a disordered region. A coiled-coil region spans residues 77-147 (AAAAELQHRA…YQQQQQLHQL (71 aa)). Disordered stretches follow at residues 262-285 (ANLY…HNEE), 353-372 (QQQQ…QQAA), 402-439 (QLSQ…PHGL), and 477-534 (TQGN…SGFL). Residues 267–285 (NEKDQKRKNKPDEPGHNEE) are compositionally biased toward basic and acidic residues. Residues 332–386 (HHLLQQEQQQQQQQQQQQQQQQQQQQQQQHNANSQAQQQAAQLQQQMQQQLQASG) are a coiled coil. Positions 402-435 (QLSQQQSQQQQLHHIPQQRQRTQSQQSQQQPQQT) are enriched in low complexity.

This sequence belongs to the RBF1 family.

It is found in the nucleus. It localises to the chromosome. Its subcellular location is the telomere. Its function is as follows. Transcriptional activator that binds to the RPG box and to telomeres. Involved in the regulation of the transition between yeast and filamentous forms and plays a role in virulence. Induces expression of HWP1, a major hyphal cell protein and virulence factor. In Candida albicans (strain SC5314 / ATCC MYA-2876) (Yeast), this protein is Transcription factor RBF1 (RBF1).